A 478-amino-acid chain; its full sequence is Septin-4 (478 aa).

The interval 1–115 (MDRSLGWQGN…RSPWGKLDPY (115 aa)) is disordered. Residues 13 to 26 (PEDRTEAGIKRFLE) show a composition bias toward basic and acidic residues. The span at 95 to 108 (APAPLSPSARPRSP) shows a compositional bias: low complexity. Residues Ser-117 and Ser-118 each carry the phosphoserine modification. Positions 141 to 414 (KGFDFTLMVA…ENYRAQCIQS (274 aa)) constitute a Septin-type G domain. The interval 151–158 (GESGLGKS) is G1 motif. GTP-binding positions include 151–158 (GESGLGKS) and Thr-185. The G3 motif stretch occupies residues 208–211 (DTPG). Positions 289–292 (AKAD) are G4 motif. 290 to 298 (KADTLTPPE) is a binding site for GTP. Position 325 is a phosphoserine (Ser-325). GTP-binding residues include Gly-348 and Arg-363. A disordered region spans residues 428 to 448 (LTRESGTDFPIPAVPPGTDPE). Ser-432 bears the Phosphoserine mark. Thr-434 is modified (phosphothreonine). A coiled-coil region spans residues 447–478 (PETEKLIREKDEELRRMQEMLHKIQKQMKENY).

The protein belongs to the TRAFAC class TrmE-Era-EngA-EngB-Septin-like GTPase superfamily. Septin GTPase family. Septins polymerize into heterooligomeric protein complexes that form filaments, and can associate with cellular membranes, actin filaments and microtubules. GTPase activity is required for filament formation. Interacts with SEPTIN8. In a mesenchymal cell line, interacts with SEPTIN9 isoform 2 variants HNA Trp-106 and Phe-111, but not the wild type SEPTIN9. Component of a septin core octameric complex consisting of SEPTIN12, SEPTIN7, SEPTIN6 and SEPTIN2 or SEPTIN4 in the order 12-7-6-2-2-6-7-12 or 12-7-6-4-4-6-7-12. Interacts with SEPTIN14 (via C-terminus). Interacts with DYRK1A. Interacts with SLC6A3/DAT and SNCA/alpha-synuclein. Interacts with STX1A; in the striatum. Interacts with XIAP (via BIR3 domain) following the induction of apoptosis. Interacts with AREL1 (via HECT domain); in the cytoplasm following induction of apoptosis. In terms of assembly, part of a complex composed of SEPTIN4 isoform ARTS, XIAP and BCL2, within the complex interacts with both BCL2 (via BH3 domain) and XIAP, ARTS acts as a scaffold protein and stabilizes the complex. Interacts with XIAP (via BIR3 domain) following the induction of apoptosis. In terms of processing, phosphorylated by DYRK1A. Post-translationally, ubiquitinated by AREL1. In terms of tissue distribution, widely expressed in adult and fetal tissues with highest expression in adult brain (at protein level), heart, liver and adrenal gland and fetal heart, kidney, liver and lung. Expressed in presynaptic terminals of dopaminergic neurons projecting from the substantia nigra pars compacta to the striatum (at protein level). Expressed in axonal varicosities in dopaminergic nerve terminals (at protein level). Expressed in the putamen and in the adjacent cerebral cortex (at protein level). Expressed in colonic crypts (at protein level). Also expressed in colorectal cancers and malignant melanomas. Expressed in platelets. Highly expressed in the brain and heart.

The protein localises to the cytoplasm. It localises to the cell projection. Its subcellular location is the cilium. It is found in the flagellum. The protein resides in the cytoplasmic vesicle. The protein localises to the secretory vesicle. It localises to the axon. Its subcellular location is the dendrite. It is found in the perikaryon. The protein resides in the synapse. The protein localises to the mitochondrion. It localises to the nucleus. Functionally, filament-forming cytoskeletal GTPase. Pro-apoptotic protein involved in LGR5-positive intestinal stem cell and Paneth cell expansion in the intestines, via its interaction with XIAP. May also play a role in the regulation of cell fate in the intestine. Positive regulator of apoptosis involved in hematopoietic stem cell homeostasis; via its interaction with XIAP. Negative regulator of repair and hair follicle regeneration in response to injury, due to inhibition of hair follicle stem cell proliferation, potentially via its interaction with XIAP. Plays an important role in male fertility and sperm motility. During spermiogenesis, essential for the establishment of the annulus (a fibrous ring structure connecting the midpiece and the principal piece of the sperm flagellum) which is a requisite for the structural and mechanical integrity of the sperm. Involved in the migration of cortical neurons and the formation of neuron leading processes during embryonic development. Required for dopaminergic metabolism in presynaptic autoreceptors; potentially via activity as a presynaptic scaffold protein. Required for the induction of cell death mediated by TGF-beta and possibly by other apoptotic stimuli. Induces apoptosis through binding and inhibition of XIAP resulting in significant reduction in XIAP levels, leading to caspase activation and cell death. Mediates the interaction between BCL2 and XIAP, thereby positively regulating the ubiquitination and degradation of BCL2 and promoting apoptosis. This chain is Septin-4, found in Homo sapiens (Human).